The primary structure comprises 503 residues: Cytochrome P450 3A14 (503 aa).

Cys442 serves as a coordination point for heme.

The protein belongs to the cytochrome P450 family. The cofactor is heme.

It is found in the endoplasmic reticulum membrane. The protein resides in the microsome membrane. It carries out the reaction an organic molecule + reduced [NADPH--hemoprotein reductase] + O2 = an alcohol + oxidized [NADPH--hemoprotein reductase] + H2O + H(+). Cytochromes P450 are a group of heme-thiolate monooxygenases. In liver microsomes, this enzyme is involved in an NADPH-dependent electron transport pathway. It oxidizes a variety of structurally unrelated compounds, including steroids, fatty acids, and xenobiotics. The protein is Cytochrome P450 3A14 (CYP3A14) of Cavia porcellus (Guinea pig).